Here is a 483-residue protein sequence, read N- to C-terminus: Galactose-3-O-sulfotransferase 4 (483 aa).

At 1–18 the chain is on the cytoplasmic side; that stretch reads MGVLSPTRTMRLWGPRSL. Residues 19–39 traverse the membrane as a helical; Signal-anchor for type II membrane protein segment; sequence GVALGVFMTIGFALQLLGGPF. Topologically, residues 40–483 are lumenal; sequence QRRLPGLQLR…PLKTSRRPSP (444 aa). The interval 225-248 is disordered; sequence KRGNPHVSRDPNPPQLPSGAGPPA. Asn-371 is a glycosylation site (N-linked (GlcNAc...) asparagine).

The protein belongs to the galactose-3-O-sulfotransferase family. It depends on Mn(2+) as a cofactor.

The protein localises to the golgi apparatus. The protein resides in the golgi stack membrane. It functions in the pathway protein modification; carbohydrate sulfation. Functionally, catalyzes the transfer of sulfate to beta-1,3-linked galactose residues in O-linked glycoproteins. Good substrates include asialofetuin, Gal-beta-1,3-GalNAc and Gal-beta-1,3 (GlcNAc-beta-1,6)GalNAc. This chain is Galactose-3-O-sulfotransferase 4 (GAL3ST4), found in Bos taurus (Bovine).